We begin with the raw amino-acid sequence, 91 residues long: Probable Fe(2+)-trafficking protein (91 aa).

The protein belongs to the Fe(2+)-trafficking protein family. In terms of assembly, monomer.

Could be a mediator in iron transactions between iron acquisition and iron-requiring processes, such as synthesis and/or repair of Fe-S clusters in biosynthetic enzymes. This chain is Probable Fe(2+)-trafficking protein, found in Salmonella agona (strain SL483).